The sequence spans 432 residues: Serine hydroxymethyltransferase (432 aa).

(6S)-5,6,7,8-tetrahydrofolate is bound by residues L131 and 135-137; that span reads GHL. K240 is modified (N6-(pyridoxal phosphate)lysine).

It belongs to the SHMT family. As to quaternary structure, homodimer. It depends on pyridoxal 5'-phosphate as a cofactor.

The protein resides in the cytoplasm. It catalyses the reaction (6R)-5,10-methylene-5,6,7,8-tetrahydrofolate + glycine + H2O = (6S)-5,6,7,8-tetrahydrofolate + L-serine. It participates in one-carbon metabolism; tetrahydrofolate interconversion. Its pathway is amino-acid biosynthesis; glycine biosynthesis; glycine from L-serine: step 1/1. In terms of biological role, catalyzes the reversible interconversion of serine and glycine with tetrahydrofolate (THF) serving as the one-carbon carrier. This reaction serves as the major source of one-carbon groups required for the biosynthesis of purines, thymidylate, methionine, and other important biomolecules. Also exhibits THF-independent aldolase activity toward beta-hydroxyamino acids, producing glycine and aldehydes, via a retro-aldol mechanism. This Acidiphilium cryptum (strain JF-5) protein is Serine hydroxymethyltransferase.